The chain runs to 928 residues: DNA ligase 4 (928 aa).

ATP-binding residues include Glu-302, Lys-304, Arg-309, Glu-362, Phe-409, Glu-469, Lys-474, Lys-492, and Lys-494. The active-site N6-AMP-lysine intermediate is Lys-304. Mg(2+) is bound at residue Glu-362. Glu-469 contributes to the Mg(2+) binding site. BRCT domains are found at residues 673–769 and 821–927; these read VESD…PYFI and PWIY…DYKF.

The protein belongs to the ATP-dependent DNA ligase family. Mg(2+) is required as a cofactor.

It is found in the nucleus. The catalysed reaction is ATP + (deoxyribonucleotide)n-3'-hydroxyl + 5'-phospho-(deoxyribonucleotide)m = (deoxyribonucleotide)n+m + AMP + diphosphate.. In terms of biological role, DNA ligase involved in DNA non-homologous end joining (NHEJ); required for double-strand break (DSB) repair. Not required for the repair of DSBs induced by ionizing radiation or UV light. Has an important role in morphogenesis, positively affecting the capacity to form hyphae. The chain is DNA ligase 4 (LIG4) from Candida albicans (strain SC5314 / ATCC MYA-2876) (Yeast).